A 1529-amino-acid chain; its full sequence is Ras guanine nucleotide exchange factor B (1529 aa).

Residues 135–186 (ISNIEKQLSNLVNLKSNTTEQTDRKYKTNLIDFKESIIQLEKDCKNLLKQSN) adopt a coiled-coil conformation. 5 disordered regions span residues 290 to 357 (INTL…ISIN), 576 to 600 (TTTT…KSSH), 680 to 724 (KRNT…HIQQ), 847 to 948 (MGKE…NHNR), and 1168 to 1206 (QPPQ…STNL). Composition is skewed to low complexity over residues 576-591 (TTTT…TTTN), 683-724 (TSSG…HIQQ), and 853-887 (NSNT…NNNE). Coiled-coil stretches lie at residues 722–798 (IQQI…LNRK) and 871–898 (NNNN…ETNK). Basic and acidic residues predominate over residues 888 to 898 (NKNENKNETNK). 4 stretches are compositionally biased toward low complexity: residues 906 to 916 (SSTSTLSSSTT), 924 to 940 (SSTN…LLPP), 1168 to 1187 (QPPQ…TTQP), and 1197 to 1206 (QPQLQQSTNL). One can recognise an N-terminal Ras-GEF domain in the interval 1075–1205 (FYRSIKYASL…PQPQLQQSTN (131 aa)). The Ras-GEF domain occupies 1282 to 1517 (SSTDIAEQLT…YEQSILLEPK (236 aa)).

The protein resides in the cytoplasm. In terms of biological role, promotes the exchange of Ras-bound GDP by GTP. Involved in phagocytosis, fluid-phase endocytosis, regulation of macropinocytosis and control of cell movement. In Dictyostelium discoideum (Social amoeba), this protein is Ras guanine nucleotide exchange factor B (gefB).